Here is a 368-residue protein sequence, read N- to C-terminus: Probable endopolygalacturonase I (368 aa).

The N-terminal stretch at 1–18 is a signal peptide; it reads MHSYQLLGLAAVGSLVSA. Positions 19 to 31 are excised as a propeptide; it reads APAPSRVSEFAKK. C35 and C50 form a disulfide bridge. PbH1 repeat units lie at residues 140 to 161, 162 to 192, and 193 to 214; these read VEDS…ISVQ, ATNV…DISE, and STGV…AINS. D207 (proton donor) is an active-site residue. An intrachain disulfide couples C209 to C225. The active site involves H229. PbH1 repeat units follow at residues 244–265, 273–295, and 307–352; these read VKNV…RIKT, VSEI…VIEQ, and STGI…DLSG. N-linked (GlcNAc...) asparagine glycosylation is present at N246. 2 disulfide bridges follow: C335-C340 and C359-C368.

The protein belongs to the glycosyl hydrolase 28 family.

The protein resides in the secreted. The enzyme catalyses (1,4-alpha-D-galacturonosyl)n+m + H2O = (1,4-alpha-D-galacturonosyl)n + (1,4-alpha-D-galacturonosyl)m.. Its function is as follows. Involved in maceration and soft-rotting of plant tissue. Hydrolyzes the 1,4-alpha glycosidic bonds of de-esterified pectate in the smooth region of the plant cell wall. The polypeptide is Probable endopolygalacturonase I (pgaI) (Aspergillus niger (strain ATCC MYA-4892 / CBS 513.88 / FGSC A1513)).